We begin with the raw amino-acid sequence, 400 residues long: Acetate kinase (400 aa).

N8 serves as a coordination point for Mg(2+). K15 provides a ligand contact to ATP. R89 provides a ligand contact to substrate. The Proton donor/acceptor role is filled by D146. Residues 206–210 (HVGNG), 283–285 (DMR), and 331–335 (GMGEN) contribute to the ATP site. Mg(2+) is bound at residue E383.

The protein belongs to the acetokinase family. In terms of assembly, homodimer. Requires Mg(2+) as cofactor. Mn(2+) serves as cofactor.

It is found in the cytoplasm. It carries out the reaction acetate + ATP = acetyl phosphate + ADP. It participates in metabolic intermediate biosynthesis; acetyl-CoA biosynthesis; acetyl-CoA from acetate: step 1/2. Catalyzes the formation of acetyl phosphate from acetate and ATP. Can also catalyze the reverse reaction. The protein is Acetate kinase of Streptococcus equi subsp. zooepidemicus (strain MGCS10565).